The sequence spans 263 residues: Acyl-[acyl-carrier-protein]--UDP-N-acetylglucosamine O-acyltransferase (263 aa).

It belongs to the transferase hexapeptide repeat family. LpxA subfamily. Homotrimer.

The protein localises to the cytoplasm. It catalyses the reaction a (3R)-hydroxyacyl-[ACP] + UDP-N-acetyl-alpha-D-glucosamine = a UDP-3-O-[(3R)-3-hydroxyacyl]-N-acetyl-alpha-D-glucosamine + holo-[ACP]. The protein operates within glycolipid biosynthesis; lipid IV(A) biosynthesis; lipid IV(A) from (3R)-3-hydroxytetradecanoyl-[acyl-carrier-protein] and UDP-N-acetyl-alpha-D-glucosamine: step 1/6. Its function is as follows. Involved in the biosynthesis of lipid A, a phosphorylated glycolipid that anchors the lipopolysaccharide to the outer membrane of the cell. The chain is Acyl-[acyl-carrier-protein]--UDP-N-acetylglucosamine O-acyltransferase from Xanthomonas axonopodis pv. citri (strain 306).